The following is a 143-amino-acid chain: MSDNKMSIEFVSKSENEAFARVAVAAFVAQLDPTIDEINDVKTAVSEAVTNSIIHGYENREDGLVRIEAEINEDQVTIAIIDKGIGIDNIEQAMEPLYTSRPDLERSGMGFTVMETFMDALEVDSEKGNGTKVVIKKKFNVVS.

The protein belongs to the anti-sigma-factor family.

It catalyses the reaction L-seryl-[protein] + ATP = O-phospho-L-seryl-[protein] + ADP + H(+). It carries out the reaction L-threonyl-[protein] + ATP = O-phospho-L-threonyl-[protein] + ADP + H(+). Its function is as follows. Binds to sigma F and blocks its ability to form an RNA polymerase holoenzyme (E-sigma F). Phosphorylates SpoIIAA on a serine residue. This phosphorylation may enable SpoIIAA to act as an anti-anti-sigma factor that counteracts SpoIIAB and thus releases sigma F from inhibition. The chain is Anti-sigma F factor from Clostridium beijerinckii (strain ATCC 51743 / NCIMB 8052) (Clostridium acetobutylicum).